The primary structure comprises 391 residues: Phosphoglycerate kinase (391 aa).

Substrate contacts are provided by residues 21–23, arginine 36, 59–62, arginine 113, and arginine 146; these read DLN and HLGR. ATP is bound by residues lysine 197, glutamate 319, and 345–348; that span reads GGDT.

It belongs to the phosphoglycerate kinase family. As to quaternary structure, monomer.

The protein localises to the cytoplasm. The catalysed reaction is (2R)-3-phosphoglycerate + ATP = (2R)-3-phospho-glyceroyl phosphate + ADP. The protein operates within carbohydrate degradation; glycolysis; pyruvate from D-glyceraldehyde 3-phosphate: step 2/5. This is Phosphoglycerate kinase from Shewanella sp. (strain W3-18-1).